A 410-amino-acid chain; its full sequence is Elongation factor Tu, chloroplastic (410 aa).

The region spanning Lys10–Gln215 is the tr-type G domain. Positions Gly19–Thr26 are G1. Residue Gly19–Thr26 participates in GTP binding. Position 26 (Thr26) interacts with Mg(2+). Residues Gly61–Asn65 are G2. A G3 region spans residues Asp82–Gly85. GTP is bound by residues Asp82–His86 and Asn137–Asp140. The segment at Asn137–Asp140 is G4. The G5 stretch occupies residues Ser175–Leu177.

Belongs to the TRAFAC class translation factor GTPase superfamily. Classic translation factor GTPase family. EF-Tu/EF-1A subfamily.

Its subcellular location is the plastid. The protein resides in the chloroplast. It catalyses the reaction GTP + H2O = GDP + phosphate + H(+). GTP hydrolase that promotes the GTP-dependent binding of aminoacyl-tRNA to the A-site of ribosomes during protein biosynthesis. The polypeptide is Elongation factor Tu, chloroplastic (tufA) (Cyanidioschyzon merolae (strain NIES-3377 / 10D) (Unicellular red alga)).